Here is a 189-residue protein sequence, read N- to C-terminus: Xanthine phosphoribosyltransferase (189 aa).

Positions 20 and 27 each coordinate xanthine. Residue 128 to 132 (ANGEA) participates in 5-phospho-alpha-D-ribose 1-diphosphate binding. Residue lysine 156 participates in xanthine binding.

It belongs to the purine/pyrimidine phosphoribosyltransferase family. Xpt subfamily. As to quaternary structure, homodimer.

The protein resides in the cytoplasm. It catalyses the reaction XMP + diphosphate = xanthine + 5-phospho-alpha-D-ribose 1-diphosphate. It participates in purine metabolism; XMP biosynthesis via salvage pathway; XMP from xanthine: step 1/1. Converts the preformed base xanthine, a product of nucleic acid breakdown, to xanthosine 5'-monophosphate (XMP), so it can be reused for RNA or DNA synthesis. This Clostridium acetobutylicum (strain ATCC 824 / DSM 792 / JCM 1419 / IAM 19013 / LMG 5710 / NBRC 13948 / NRRL B-527 / VKM B-1787 / 2291 / W) protein is Xanthine phosphoribosyltransferase.